The chain runs to 350 residues: tRNA U34 carboxymethyltransferase (350 aa).

Residues Lys101, Trp125, Lys130, Gly150, 172–174 (DPS), 208–209 (LE), Met224, Tyr228, and Arg343 each bind carboxy-S-adenosyl-L-methionine.

This sequence belongs to the class I-like SAM-binding methyltransferase superfamily. CmoB family. Homotetramer.

It catalyses the reaction carboxy-S-adenosyl-L-methionine + 5-hydroxyuridine(34) in tRNA = 5-carboxymethoxyuridine(34) in tRNA + S-adenosyl-L-homocysteine + H(+). In terms of biological role, catalyzes carboxymethyl transfer from carboxy-S-adenosyl-L-methionine (Cx-SAM) to 5-hydroxyuridine (ho5U) to form 5-carboxymethoxyuridine (cmo5U) at position 34 in tRNAs. This chain is tRNA U34 carboxymethyltransferase, found in Psychrobacter arcticus (strain DSM 17307 / VKM B-2377 / 273-4).